A 116-amino-acid polypeptide reads, in one-letter code: U16-barytoxin-Tl1c (116 aa).

A signal peptide spans 1 to 20; that stretch reads MKTIIVFLSLLVLATKFGDA. Residues 21-76 constitute a propeptide that is removed on maturation; it reads NEGVNQEQMKEVIQNEFREDFLNEMAPMSLLQQLEAIESTLLEKEADRNSRQKRCN. Intrachain disulfides connect C75–C90, C82–C95, and C89–C110.

Belongs to the neurotoxin 14 (magi-1) family. 06 (ICK-Trit) subfamily. As to expression, expressed by the venom gland.

It is found in the secreted. Functionally, ion channel inhibitor. This is U16-barytoxin-Tl1c from Trittame loki (Brush-footed trapdoor spider).